The primary structure comprises 347 residues: D-alanine--D-alanine ligase (347 aa).

The region spanning 134–332 (KLYAKDLGVK…LAQSLPKTPK (199 aa)) is the ATP-grasp domain. An ATP-binding site is contributed by 161–216 (LIGFNFPFIVKPSNAGSSLGVNVVKEEKELIYALDSAFEYSKEVLIEPFIQGVKEY). Mg(2+) is bound by residues D288, E300, and N302.

This sequence belongs to the D-alanine--D-alanine ligase family. Requires Mg(2+) as cofactor. Mn(2+) is required as a cofactor.

Its subcellular location is the cytoplasm. The enzyme catalyses 2 D-alanine + ATP = D-alanyl-D-alanine + ADP + phosphate + H(+). The protein operates within cell wall biogenesis; peptidoglycan biosynthesis. Functionally, cell wall formation. The sequence is that of D-alanine--D-alanine ligase from Helicobacter pylori (strain J99 / ATCC 700824) (Campylobacter pylori J99).